A 25-amino-acid polypeptide reads, in one-letter code: Toxin Tpa3 (25 aa).

Belongs to the non-disulfide-bridged peptide (NDBP) superfamily. As to expression, expressed by the venom gland.

Its subcellular location is the secreted. In terms of biological role, unknown. Is not toxic to mammals. This is Toxin Tpa3 from Tityus pachyurus (Colombian scorpion).